The following is a 208-amino-acid chain: Vacuolar iron transporter homolog 5 (208 aa).

The Cytoplasmic portion of the chain corresponds to 1–41 (MAAMMNNERSSSNKLQVDAENPAAVGDELDLAARANWLRAA). A helical transmembrane segment spans residues 42 to 62 (VLGANDGLVSTASLMLGVGAV). Residues 63 to 69 (KAEARAM) are Vacuolar-facing. Residues 70-90 (VISGFAGLLAGACSMAIGEFV) form a helical membrane-spanning segment. The Cytoplasmic portion of the chain corresponds to 91–125 (SVCSQRDVELAQLERDGKRGGEEEKALPSPAQAAA). The chain crosses the membrane as a helical span at residues 126–146 (ASAMAFSVGAVVPLLAAGFIV). Residues 147–151 (NYRLR) lie on the Vacuolar side of the membrane. A helical membrane pass occupies residues 152 to 172 (IAVVVAVASVALAAFGCVGAV). The Cytoplasmic portion of the chain corresponds to 173-184 (LGRAAVARSSAR). Residues 185-205 (VVLGGWAAMGITFGLMRLFKA) traverse the membrane as a helical segment. The Vacuolar portion of the chain corresponds to 206 to 208 (SGI).

The protein belongs to the CCC1 family.

The protein resides in the vacuole membrane. The catalysed reaction is Fe(2+)(in) = Fe(2+)(out). Its function is as follows. Probable vacuolar iron transporter that may be involved in the regulation of iron distribution throughout the plant. This Oryza sativa subsp. japonica (Rice) protein is Vacuolar iron transporter homolog 5.